The chain runs to 352 residues: Heat-inducible transcription repressor HrcA (352 aa).

This sequence belongs to the HrcA family.

In terms of biological role, negative regulator of class I heat shock genes (grpE-dnaK-dnaJ and groELS operons). Prevents heat-shock induction of these operons. The polypeptide is Heat-inducible transcription repressor HrcA (Thermosynechococcus vestitus (strain NIES-2133 / IAM M-273 / BP-1)).